A 300-amino-acid polypeptide reads, in one-letter code: Probable L-serine dehydratase, alpha chain (300 aa).

It belongs to the iron-sulfur dependent L-serine dehydratase family. Heterodimer of an alpha chain and a beta chain. Requires [4Fe-4S] cluster as cofactor.

The enzyme catalyses L-serine = pyruvate + NH4(+). The protein operates within carbohydrate biosynthesis; gluconeogenesis. This Bacillus subtilis (strain 168) protein is Probable L-serine dehydratase, alpha chain (sdaAA).